A 100-amino-acid chain; its full sequence is NADH-quinone oxidoreductase subunit K (100 aa).

3 consecutive transmembrane segments (helical) span residues 2–22 (ISLNHYLLLCVILFCIGLFGI), 28–48 (ILMLFFSTEILLNAINIGFVA), and 63–83 (LFIIAIAASEIAVGLGLVVIW).

It belongs to the complex I subunit 4L family. NDH-1 is composed of 14 different subunits. Subunits NuoA, H, J, K, L, M, N constitute the membrane sector of the complex.

Its subcellular location is the cell inner membrane. The catalysed reaction is a quinone + NADH + 5 H(+)(in) = a quinol + NAD(+) + 4 H(+)(out). Its function is as follows. NDH-1 shuttles electrons from NADH, via FMN and iron-sulfur (Fe-S) centers, to quinones in the respiratory chain. The immediate electron acceptor for the enzyme in this species is believed to be ubiquinone. Couples the redox reaction to proton translocation (for every two electrons transferred, four hydrogen ions are translocated across the cytoplasmic membrane), and thus conserves the redox energy in a proton gradient. The protein is NADH-quinone oxidoreductase subunit K of Helicobacter hepaticus (strain ATCC 51449 / 3B1).